The following is a 620-amino-acid chain: MVLEDRKDGSSLPGRSGSFSKSSPSELDVVDPYKRISSPGSILDAEKVEKKPGGWRAVSFILGNETLERLGSIGLLANFMVYLTKVFHLEQVDAANVINIWSGFTNLTPLVGAYISDTYVGRFKTIAFASFATLLGLITITLTASFPQLHPASCNSQDPLSCGGPNKLQIGVLLLGLCFLSVGSGGIRPCSIPFGVDQFDQRTEEGVKGVASFFNWYYMTFTVVLIITQTVVVYIQDQVSWIIGFSIPTGLMALAVVMFFAGMKRYVYVKPEGSIFSGIAQVIVAARKKRKLKLPAEDDGTVTYYDPAIKSSVLSKLHRSNQFRCLDKAAVVIEGDLTPEGPPADKWRLCSVQEVEEVKCLIRIVPIWSAGIISLAAMTTQGTFTVSQALKMDRNLGPKFEIPAGSLSVISLLTIGIFLPFYDRVFVPFMRRITGHKSGITLLQRIGTGIVFAIFSMIVAGIVERMRRIRSINAGDPTGMTPMSVFWLSPQLILMGLCEAFNIIGQIEFFNSQFPEHMRSIANSLFSLSFAGSSYLSSFLVTVVHKFSGGHDRPDWLNKNLNAGKLDYFYYLIAVLGVVNLVYFWYCARGYRYKVGLPIEDFEEDKSSDDVEMTSKKSMK.

The segment at 1–32 (MVLEDRKDGSSLPGRSGSFSKSSPSELDVVDP) is disordered. The segment covering 10-25 (SSLPGRSGSFSKSSPS) has biased composition (low complexity). Helical transmembrane passes span 70–90 (LGSI…FHLE), 95–115 (ANVI…GAYI), 126–146 (IAFA…TASF), 167–187 (KLQI…SGGI), 213–233 (FFNW…TVVV), 241–261 (WIIG…MFFA), 364–384 (IVPI…QGTF), 402–422 (IPAG…LPFY), 443–463 (LQRI…AGIV), 485–505 (VFWL…NIIG), 524–544 (SLFS…VTVV), and 568–588 (YFYY…WYCA).

It belongs to the major facilitator superfamily. Proton-dependent oligopeptide transporter (POT/PTR) (TC 2.A.17) family. Interacts with NLA. Ubiquitinated by NLA. Ubiquitination of NPF2.13 leads to its degradation by the proteasome. Expressed in leaves and flowers. Detected in stems and siliques. Highest expression in the distal lamina of older leaves. Restricted to the sieve element and companion cell complex of the minor vein.

The protein localises to the cell membrane. In terms of biological role, low-affinity proton-dependent nitrate transporter. Not involved in dipeptides transport, but has a weak glucosinolate transport activity. Involved in phloem loading and nitrate remobilization from the older leaves to other tissues. In Arabidopsis thaliana (Mouse-ear cress), this protein is Protein NRT1/ PTR FAMILY 2.13 (NPF2.13).